The following is a 340-amino-acid chain: GTP 3',8-cyclase (340 aa).

One can recognise a Radical SAM core domain in the interval Lys8–Asp227. Arg17 provides a ligand contact to GTP. Residues Cys24 and Cys28 each coordinate [4Fe-4S] cluster. Tyr30 provides a ligand contact to S-adenosyl-L-methionine. Cys31 contributes to the [4Fe-4S] cluster binding site. Residue Arg71 participates in GTP binding. Gly75 is an S-adenosyl-L-methionine binding site. Thr102 is a GTP binding site. An S-adenosyl-L-methionine-binding site is contributed by Ser126. Lys163 serves as a coordination point for GTP. Met197 lines the S-adenosyl-L-methionine pocket. [4Fe-4S] cluster is bound by residues Cys261 and Cys264. Arg266–Arg268 contributes to the GTP binding site. Cys278 contacts [4Fe-4S] cluster.

This sequence belongs to the radical SAM superfamily. MoaA family. As to quaternary structure, monomer and homodimer. [4Fe-4S] cluster is required as a cofactor.

It carries out the reaction GTP + AH2 + S-adenosyl-L-methionine = (8S)-3',8-cyclo-7,8-dihydroguanosine 5'-triphosphate + 5'-deoxyadenosine + L-methionine + A + H(+). It functions in the pathway cofactor biosynthesis; molybdopterin biosynthesis. In terms of biological role, catalyzes the cyclization of GTP to (8S)-3',8-cyclo-7,8-dihydroguanosine 5'-triphosphate. This is GTP 3',8-cyclase from Staphylococcus aureus (strain MRSA252).